The primary structure comprises 99 residues: Evasin P1162 (99 aa).

An N-terminal signal peptide occupies residues 1–28 (MEVKTFAFLQIAVCIAIGIELICAGTNA). 3 disulfide bridges follow: Cys40–Cys59, Cys44–Cys61, and Cys55–Cys72. 4 N-linked (GlcNAc...) asparagine glycosylation sites follow: Asn43, Asn49, Asn58, and Asn85.

It localises to the secreted. In terms of biological role, salivary chemokine-binding protein which binds to host chemokines CXCL1, CXCL2, CXCL3, CXCL5 and CXCL8. This is Evasin P1162 from Ixodes ricinus (Common tick).